Reading from the N-terminus, the 140-residue chain is NADPH-dependent 7-cyano-7-deazaguanine reductase (140 aa).

C51 (thioimide intermediate) is an active-site residue. The active-site Proton donor is D58. Substrate contacts are provided by residues 73 to 75 (LES) and 92 to 93 (HE).

The protein belongs to the GTP cyclohydrolase I family. QueF type 1 subfamily.

The protein localises to the cytoplasm. The enzyme catalyses 7-aminomethyl-7-carbaguanine + 2 NADP(+) = 7-cyano-7-deazaguanine + 2 NADPH + 3 H(+). It participates in tRNA modification; tRNA-queuosine biosynthesis. Catalyzes the NADPH-dependent reduction of 7-cyano-7-deazaguanine (preQ0) to 7-aminomethyl-7-deazaguanine (preQ1). This Syntrophus aciditrophicus (strain SB) protein is NADPH-dependent 7-cyano-7-deazaguanine reductase.